A 543-amino-acid polypeptide reads, in one-letter code: MFSWLKKGGARGQRPEAIRTVTSSLKELYRTKLLPLEEHYRFGSFHSPALEDADFDGKPMVLVAGQYSTGKTSFIQYLLEQEVPGSRVGPEPTTDCFVAVMHGETEGTVPGNALVVDPEKPFRKLNPFGNTFLNRFMCAQLPNQVLESISIIDTPGILSGAKQRVSRGYDFPAVLRWFAERVDLIILLFDAHKLEISDEFSEAIGALRGHEDKIRVVLNKADMVETQQLMRVYGALMWALGKVVGTPEVLRVYIGSFWSQPLLVPDNRRLFELEEQDLFRDIQGLPRHAALRKLNDLVKRARLVRVHAYIISYLKKEMPTVFGKENKKKQLILKLPVIFAKIQLEHHISPGDFPDCQKMQELLMAHDFTKFHSLKPKLLEALDDMLAQDIAKLMPLLRQEELESVEAGVQGGAFEGTRMGPFVERGPDEAIEDGEEGSEDDAEWVVTKDKSKYDEIFYNLAPADGKLSGSKAKTWMVGTKLPNSVLGRIWKLSDVDRDGMLDDEEFALASHLIEAKLEGHGLPTNLPRRLVPPSKRRQKGSAE.

A phosphoserine mark is found at Ser-3 and Ser-44. The Dynamin-type G domain occupies 55–286; the sequence is FDGKPMVLVA…DLFRDIQGLP (232 aa). The interval 65 to 72 is G1 motif; it reads GQYSTGKT. Position 65–72 (65–72) interacts with ATP; it reads GQYSTGKT. The segment at 91–92 is G2 motif; that stretch reads EP. A G3 motif region spans residues 153–156; it reads DTPG. The segment at 219–222 is G4 motif; that stretch reads NKAD. Lys-220 is a binding site for ATP. Val-243 is a region of interest (G5 motif). Trp-258 contributes to the ATP binding site. The mediates membrane-binding stretch occupies residues 320–340; the sequence is TVFGKENKKKQLILKLPVIFA. Phosphoserine is present on residues Ser-438, Ser-468, Ser-470, Ser-484, and Ser-493. Residues 449–537 form the EH domain; sequence DKSKYDEIFY…RRLVPPSKRR (89 aa). The region spanning 481 to 516 is the EF-hand domain; sequence LPNSVLGRIWKLSDVDRDGMLDDEEFALASHLIEAK. Positions 494, 496, 498, 500, and 505 each coordinate Ca(2+). Residues 521-543 form a disordered region; that stretch reads GLPTNLPRRLVPPSKRRQKGSAE. Positions 534-543 are enriched in basic residues; it reads SKRRQKGSAE.

Belongs to the TRAFAC class dynamin-like GTPase superfamily. Dynamin/Fzo/YdjA family. EHD subfamily. Homodimer and homooligomer. Interacts with EHD1. May also interact with EHD3 and EHD4. Interacts with MYOF. Interacts with EHBP1. Interacts with FER1L5 (via second C2 domain). Interacts with CAV1 in a cholesterol-dependent manner. Interacts (via EH domain) with PACSIN2 (via NPF motifs); this interaction probably stabilizes the caveolae. In terms of tissue distribution, detected in lung and adipocytes. Detected at lower levels in heart and skeletal muscle.

It is found in the cell membrane. The protein localises to the membrane. The protein resides in the caveola. Its subcellular location is the endosome membrane. It localises to the cytoplasm. It is found in the cytosol. The very low intrinsic ATPase activity is increased upon interaction with liposomes. Functionally, ATP- and membrane-binding protein that controls membrane reorganization/tubulation upon ATP hydrolysis. Plays a role in membrane trafficking between the plasma membrane and endosomes. Important for the internalization of GLUT4. Required for fusion of myoblasts to skeletal muscle myotubes. Required for normal translocation of FER1L5 to the plasma membrane. Regulates the equilibrium between cell surface-associated and cell surface-dissociated caveolae by constraining caveolae at the cell membrane. This is EH domain-containing protein 2 from Mus musculus (Mouse).